A 388-amino-acid polypeptide reads, in one-letter code: tRNA(Ile)-lysidine synthase (388 aa).

51 to 56 (SGGRDS) is a binding site for ATP.

It belongs to the tRNA(Ile)-lysidine synthase family.

The protein localises to the cytoplasm. It catalyses the reaction cytidine(34) in tRNA(Ile2) + L-lysine + ATP = lysidine(34) in tRNA(Ile2) + AMP + diphosphate + H(+). Its function is as follows. Ligates lysine onto the cytidine present at position 34 of the AUA codon-specific tRNA(Ile) that contains the anticodon CAU, in an ATP-dependent manner. Cytidine is converted to lysidine, thus changing the amino acid specificity of the tRNA from methionine to isoleucine. This Bifidobacterium longum (strain DJO10A) protein is tRNA(Ile)-lysidine synthase.